The sequence spans 403 residues: Acetate kinase (403 aa).

Asn7 provides a ligand contact to Mg(2+). Lys14 is an ATP binding site. A substrate-binding site is contributed by Arg97. The active-site Proton donor/acceptor is the Asp154. Residues 213-217 (HLGNG), 287-289 (DMR), and 335-339 (GIGEN) contribute to the ATP site. Residue Glu388 participates in Mg(2+) binding.

It belongs to the acetokinase family. Homodimer. Mg(2+) is required as a cofactor. Requires Mn(2+) as cofactor.

Its subcellular location is the cytoplasm. The catalysed reaction is acetate + ATP = acetyl phosphate + ADP. The protein operates within metabolic intermediate biosynthesis; acetyl-CoA biosynthesis; acetyl-CoA from acetate: step 1/2. Its function is as follows. Catalyzes the formation of acetyl phosphate from acetate and ATP. Can also catalyze the reverse reaction. In Synechococcus sp. (strain JA-2-3B'a(2-13)) (Cyanobacteria bacterium Yellowstone B-Prime), this protein is Acetate kinase.